A 483-amino-acid chain; its full sequence is V-type proton ATPase subunit B 2 (483 aa).

It belongs to the ATPase alpha/beta chains family. V-ATPase is a heteromultimeric enzyme composed of a peripheral catalytic V1 complex (main components: subunits A, B, C, D, E, and F) attached to an integral membrane V0 proton pore complex (main component: the proteolipid protein).

Functionally, non-catalytic subunit of the peripheral V1 complex of vacuolar ATPase. V-ATPase is responsible for acidifying a variety of intracellular compartments in eukaryotic cells. The chain is V-type proton ATPase subunit B 2 from Hordeum vulgare (Barley).